The primary structure comprises 220 residues: Germin-like protein subfamily 2 member 4 (220 aa).

Positions 1–21 (MDSRCFGFFFTLLSLNVIVLA) are cleaved as a signal peptide. A disulfide bond links cysteine 31 and cysteine 46. Asparagine 51 and asparagine 69 each carry an N-linked (GlcNAc...) asparagine glycan. The Cupin type-1 domain occupies 58–209 (FFAGIGKPAV…TFQIGTKEIE (152 aa)). 4 residues coordinate Mn(2+): histidine 108, histidine 110, glutamate 115, and histidine 154.

Belongs to the germin family. As to quaternary structure, oligomer (believed to be a pentamer but probably hexamer).

It localises to the secreted. The protein resides in the extracellular space. Its subcellular location is the apoplast. Its function is as follows. May play a role in plant defense. Probably has no oxalate oxidase activity even if the active site is conserved. The polypeptide is Germin-like protein subfamily 2 member 4 (GLP10) (Arabidopsis thaliana (Mouse-ear cress)).